The following is a 627-amino-acid chain: Phosphomethylpyrimidine synthase (627 aa).

The span at 1 to 24 (MSATQKNNITRLEQLDRQSTQPFP) shows a compositional bias: polar residues. A disordered region spans residues 1–29 (MSATQKNNITRLEQLDRQSTQPFPNSRKV). Residues N231, M260, Y289, H325, 345 to 347 (SRG), 386 to 389 (DGLR), and E425 each bind substrate. Position 429 (H429) interacts with Zn(2+). Position 452 (Y452) interacts with substrate. H493 lines the Zn(2+) pocket. [4Fe-4S] cluster-binding residues include C573, C576, and C581.

It belongs to the ThiC family. Homodimer. [4Fe-4S] cluster serves as cofactor.

It catalyses the reaction 5-amino-1-(5-phospho-beta-D-ribosyl)imidazole + S-adenosyl-L-methionine = 4-amino-2-methyl-5-(phosphooxymethyl)pyrimidine + CO + 5'-deoxyadenosine + formate + L-methionine + 3 H(+). The protein operates within cofactor biosynthesis; thiamine diphosphate biosynthesis. Functionally, catalyzes the synthesis of the hydroxymethylpyrimidine phosphate (HMP-P) moiety of thiamine from aminoimidazole ribotide (AIR) in a radical S-adenosyl-L-methionine (SAM)-dependent reaction. In Pseudomonas paraeruginosa (strain DSM 24068 / PA7) (Pseudomonas aeruginosa (strain PA7)), this protein is Phosphomethylpyrimidine synthase.